A 199-amino-acid polypeptide reads, in one-letter code: Transgelin-3 (199 aa).

Residues 24–136 form the Calponin-homology (CH) domain; the sequence is ADLENKLVDW…RTLMALGSVA (113 aa). S163 carries the phosphoserine modification. A Calponin-like repeat occupies 174 to 199; sequence IGLQMGSNKGASQAGMTGYGMPRQIM. The segment covering 176–188 has biased composition (polar residues); sequence LQMGSNKGASQAG. A disordered region spans residues 176–199; it reads LQMGSNKGASQAGMTGYGMPRQIM.

This sequence belongs to the calponin family. Widely expressed in the brain. Expression is increased in the superior frontal cortex of alcoholics, but not in the motor cortex or cerebellum.

In Homo sapiens (Human), this protein is Transgelin-3 (TAGLN3).